Here is an 890-residue protein sequence, read N- to C-terminus: Genome polyprotein 2 (890 aa).

The 121-residue stretch at 135-255 folds into the Peptidase C6 domain; that stretch reads AFDFAHGYCY…NSDLLDGIVG (121 aa). Catalysis depends on for helper component proteinase activity residues Cys-143 and His-215. A disordered region spans residues 507–533; sequence TTSGDDDSPPPPGDSPSHPPGRSPDRV. Over residues 515–528 the composition is skewed to pro residues; that stretch reads PPPPGDSPSHPPGR.

This sequence belongs to the bymoviruses polyprotein 2 family. In terms of processing, the viral RNA2 of bymoviruses is expressed as a single polyprotein which undergoes post-translational proteolytic processing resulting in the production of at least two individual proteins. The HC-pro cleaves its C-terminus autocatalytically (Potential).

It carries out the reaction Hydrolyzes a Gly-|-Gly bond at its own C-terminus, commonly in the sequence -Tyr-Xaa-Val-Gly-|-Gly, in the processing of the potyviral polyprotein.. The sequence is that of Genome polyprotein 2 (RNA2) from Hordeum vulgare (Barley).